A 444-amino-acid chain; its full sequence is Glutamyl-tRNA reductase (444 aa).

Residues T49–R52, S109, E114–Q116, and Q120 each bind substrate. C50 acts as the Nucleophile in catalysis. An NADP(+)-binding site is contributed by G189–G194.

It belongs to the glutamyl-tRNA reductase family. As to quaternary structure, homodimer.

It carries out the reaction (S)-4-amino-5-oxopentanoate + tRNA(Glu) + NADP(+) = L-glutamyl-tRNA(Glu) + NADPH + H(+). It participates in porphyrin-containing compound metabolism; protoporphyrin-IX biosynthesis; 5-aminolevulinate from L-glutamyl-tRNA(Glu): step 1/2. In terms of biological role, catalyzes the NADPH-dependent reduction of glutamyl-tRNA(Glu) to glutamate 1-semialdehyde (GSA). This is Glutamyl-tRNA reductase from Bacillus cereus (strain AH187).